We begin with the raw amino-acid sequence, 55 residues long: Large ribosomal subunit protein bL33 (55 aa).

Belongs to the bacterial ribosomal protein bL33 family.

This is Large ribosomal subunit protein bL33 from Buchnera aphidicola subsp. Acyrthosiphon pisum (strain 5A).